Reading from the N-terminus, the 903-residue chain is Valine--tRNA ligase (903 aa).

Over residues 1–15 (MVCVTDQNNENPSQN) the composition is skewed to polar residues. A disordered region spans residues 1–22 (MVCVTDQNNENPSQNRADKLPK). Positions 61 to 71 (PNVTGQLHMGH) match the 'HIGH' region motif. Residues 552–556 (KMSKS) carry the 'KMSKS' region motif. An ATP-binding site is contributed by Lys-555. Residues 836–902 (TVDVAAERKR…ERITKRLEEL (67 aa)) adopt a coiled-coil conformation.

It belongs to the class-I aminoacyl-tRNA synthetase family. ValS type 1 subfamily. Monomer.

It localises to the cytoplasm. It catalyses the reaction tRNA(Val) + L-valine + ATP = L-valyl-tRNA(Val) + AMP + diphosphate. Its function is as follows. Catalyzes the attachment of valine to tRNA(Val). As ValRS can inadvertently accommodate and process structurally similar amino acids such as threonine, to avoid such errors, it has a 'posttransfer' editing activity that hydrolyzes mischarged Thr-tRNA(Val) in a tRNA-dependent manner. The polypeptide is Valine--tRNA ligase (Corynebacterium efficiens (strain DSM 44549 / YS-314 / AJ 12310 / JCM 11189 / NBRC 100395)).